The sequence spans 588 residues: Adenine deaminase (588 aa).

This sequence belongs to the metallo-dependent hydrolases superfamily. Adenine deaminase family. In terms of assembly, homodimer. Requires Mn(2+) as cofactor.

The catalysed reaction is adenine + H2O + H(+) = hypoxanthine + NH4(+). The protein is Adenine deaminase of Escherichia coli O45:K1 (strain S88 / ExPEC).